Here is a 608-residue protein sequence, read N- to C-terminus: Isocitrate dehydrogenase kinase/phosphatase (608 aa).

ATP contacts are provided by residues 327-333 (APGIKGL) and lysine 348. Aspartate 383 is an active-site residue.

This sequence belongs to the AceK family.

It is found in the cytoplasm. It catalyses the reaction L-seryl-[isocitrate dehydrogenase] + ATP = O-phospho-L-seryl-[isocitrate dehydrogenase] + ADP + H(+). Its function is as follows. Bifunctional enzyme which can phosphorylate or dephosphorylate isocitrate dehydrogenase (IDH) on a specific serine residue. This is a regulatory mechanism which enables bacteria to bypass the Krebs cycle via the glyoxylate shunt in response to the source of carbon. When bacteria are grown on glucose, IDH is fully active and unphosphorylated, but when grown on acetate or ethanol, the activity of IDH declines drastically concomitant with its phosphorylation. This Burkholderia ambifaria (strain ATCC BAA-244 / DSM 16087 / CCUG 44356 / LMG 19182 / AMMD) (Burkholderia cepacia (strain AMMD)) protein is Isocitrate dehydrogenase kinase/phosphatase.